A 294-amino-acid chain; its full sequence is tRNA dimethylallyltransferase (294 aa).

11-18 (GPTAVGKT) is a binding site for ATP. 13–18 (TAVGKT) serves as a coordination point for substrate. Positions 36-39 (DSQQ) are interaction with substrate tRNA.

Belongs to the IPP transferase family. In terms of assembly, monomer. Mg(2+) serves as cofactor.

The enzyme catalyses adenosine(37) in tRNA + dimethylallyl diphosphate = N(6)-dimethylallyladenosine(37) in tRNA + diphosphate. Its function is as follows. Catalyzes the transfer of a dimethylallyl group onto the adenine at position 37 in tRNAs that read codons beginning with uridine, leading to the formation of N6-(dimethylallyl)adenosine (i(6)A). The chain is tRNA dimethylallyltransferase from Lactococcus lactis subsp. cremoris (strain MG1363).